Consider the following 433-residue polypeptide: MDASDFVEDEAAIAQQKLSNEEYKIWKKNSPFLYDLVVTHALEWPSLTCQWLPDKESPAGQSYTQHRLLLGTHTSGQDQNYLQFAQVQLPTTGADGASNSAESRLDLKQYDEDKGEIGSYSATTARLSIVQKINHDGEINRARYCPQNCDLIATRSVTGKTYIFDRTKHSNTPSADGVCRPDIILEGQHKEGYGLSWSPLKQGHILAASEDTTVCHWDINNYTKPNNTLQPSATYTGHTAIVEDVAWHNHHESLFGSVGDDRQLLIWDIREPASAPKYRVEAHTGEVNALAFSPENENILVTGSSDKSVGVWDLRNLKVKLHSLESHTDEILSVCWSPHHATVLASASADRRVNLWDLSKIGQEQTPDDAEDGPPELIFVHGGHTSRPTDLAWSPHMEWALTSAAEDNIVMVWRPSKAVIDTGNEELTPDDLE.

WD repeat units follow at residues 134 to 174, 187 to 227, 237 to 277, 282 to 322, and 326 to 366; these read NHDG…NTPS, GQHK…KPNN, GHTA…SAPK, AHTG…VKLH, and SHTD…QEQT. Residues 368 to 372 are interaction with the histone H4 N-terminus; it reads DDAED. A WD 6 repeat occupies 383–433; the sequence is GHTSRPTDLAWSPHMEWALTSAAEDNIVMVWRPSKAVIDTGNEELTPDDLE.

It belongs to the WD repeat RBAP46/RBAP48/MSI1 family. Component of the HAT-B complex composed of at least HAT1 and HAT2. The HAT-B complex binds to histone H4 tail.

The protein localises to the cytoplasm. Its subcellular location is the nucleus. Its function is as follows. Regulatory subunit of the histone acetylase B (HAT-B) complex. The complex acetylates 'Lys-12' of histone H4 which is required for telomeric silencing. The chain is Histone acetyltransferase type B subunit 2 (HAT2) from Mycosarcoma maydis (Corn smut fungus).